The sequence spans 381 residues: MIISASTDYRAAAQRKLPPFLFHYADGGAYAEHTLRHNVSDLASIALRQRVLKNMSDLSLETRLFDETLSMPVALAPVGLTGMYARRGEVQAARAAAAHGIPFTMSTVSVCPIEEVAPAIDRPMWFQLYVLKDRGFMRNALERAKAAGVKTLVFTVDMPVPGARYRDAHSGMSGPNAPLRRVWQAMTHPQWALDVGLLGRPHDLGNISKYRGNPTGLADYIGWLGNNFDPSISWKDLEWIREFWDGPMIIKGILDADDARDAVKFGADGIVVSNHGGRQLDGVLSSARALPAIADAVKGDIKILADSGIRSGLDVVRMIALGADTVLIGRAFLYALATHGEAGVKNLLALFEKEMRVAMVLTGAKSISEITRDSLVRELGA.

In terms of domain architecture, FMN hydroxy acid dehydrogenase spans 1-380; the sequence is MIISASTDYR…TRDSLVRELG (380 aa). A substrate-binding site is contributed by Tyr24. Residues Ser106 and Gln127 each coordinate FMN. Tyr129 lines the substrate pocket. Thr155 provides a ligand contact to FMN. Arg164 contributes to the substrate binding site. Lys251 is a binding site for FMN. The active-site Proton acceptor is the His275. Residue Arg278 coordinates substrate. 306-330 is an FMN binding site; the sequence is DSGIRSGLDVVRMIALGADTVLIGR.

It belongs to the FMN-dependent alpha-hydroxy acid dehydrogenase family. In terms of assembly, homotetramer. FMN is required as a cofactor.

The protein localises to the cell inner membrane. The enzyme catalyses (S)-lactate + A = pyruvate + AH2. Functionally, catalyzes the conversion of L-lactate to pyruvate. Is coupled to the respiratory chain. The chain is L-lactate dehydrogenase from Pseudomonas entomophila (strain L48).